The sequence spans 537 residues: uncharacterized protein (537 aa).

Disordered regions lie at residues 1 to 33, 71 to 98, 197 to 220, and 516 to 537; these read MEPGSKLSEDETFSQTFNEEEQEDSRNKDILAF, SSPPSVRVPRSRRNRRNSRVDSEARKRQ, SHNNMASSNTQSNTQLSEMESEEK, and GRQRSSRYKSHVHKTNTSEEQN. Residue serine 72 is modified to Phosphoserine. Residues 88–98 are compositionally biased toward basic and acidic residues; sequence SRVDSEARKRQ. Polar residues predominate over residues 197 to 214; that stretch reads SHNNMASSNTQSNTQLSE. Residues 516–529 show a composition bias toward basic residues; sequence GRQRSSRYKSHVHK.

Belongs to the NAD kinase family.

This is an uncharacterized protein from Schizosaccharomyces pombe (strain 972 / ATCC 24843) (Fission yeast).